We begin with the raw amino-acid sequence, 387 residues long: MAGRSVRVPRRGSAGTQSRGQLAAGRDLLAREQEYKRLNEELEAKTADLVRQAEEVIREQQEVRARPFSALTTSCKEEGGSSSRDLLSSEGTHPWTETKPKTKNTGPVNKIQNRLHSADKERKTNSSAKLKYPDAQTANDVAIPDDFSDFSLAKTISRIEGQLDEDGLPECAEDDSFCGVSKDIGTEAQIRFLKAKLHVMQEELDSVVCECSKKEDKIQDLKSKVKNLEEDCVRQQRTVTSQQSQIEKYKNLFEEANKKCDELQQQLSSVERELESKRRLQKQAASSQSATEVRLNRALEEAEKYKVELSKLRQTNKDITNEDHQKIEVLKSENKKLERQKGELMIGFKKQLKLIDILKRQKMHIEAAKMLSFSEEEFMKALEWGSS.

2 disordered regions span residues 1 to 25 (MAGR…LAAG) and 58 to 133 (REQQ…LKYP). 2 stretches are compositionally biased toward polar residues: residues 70–91 (ALTT…SSEG) and 103–115 (KNTG…QNRL). Residues 184–347 (IGTEAQIRFL…ERQKGELMIG (164 aa)) adopt a coiled-coil conformation.

As to expression, testis-specific.

It is found in the cytoplasm. It localises to the cytoskeleton. Its subcellular location is the microtubule organizing center. The protein resides in the centrosome. The protein localises to the centriolar satellite. The chain is Testis-expressed protein 9 (Tex9) from Mus musculus (Mouse).